The following is a 212-amino-acid chain: Probable U3 small nucleolar RNA-associated protein 11 (212 aa).

Belongs to the UTP11 family. In terms of assembly, component of the ribosomal small subunit (SSU) processome.

It localises to the nucleus. It is found in the nucleolus. Involved in nucleolar processing of pre-18S ribosomal RNA. This Plasmodium falciparum (isolate 3D7) protein is Probable U3 small nucleolar RNA-associated protein 11.